The following is a 437-amino-acid chain: Trypacidin cluster transcriptional coactivator tpcD (437 aa).

An HTH iclR-type domain is found at 75 to 144 (LAVQSQLLSC…PQRGHVAHSP (70 aa)). Positions 105–124 (IADLARLSGVPEAQLARIIR) form a DNA-binding region, H-T-H motif.

As to expression, specifically expressed in conidia.

The protein localises to the nucleus. In terms of biological role, transcriptional coactivator; part of the gene cluster that mediates the biosynthesis of trypacidin, a mycotoxin with antiprotozoal activity and that plays a role in the infection process. With tpcE, coregulates the production of trypacidin. The sequence is that of Trypacidin cluster transcriptional coactivator tpcD from Aspergillus fumigatus (strain ATCC MYA-4609 / CBS 101355 / FGSC A1100 / Af293) (Neosartorya fumigata).